Consider the following 365-residue polypeptide: MQKNYLELIKKVRERSNPDLVQMTKMYSETLSGSKLFENKSIEYSDVSIYIKESMKGVAPSYTMNSKVAANKVEAHLKKSHGNLVDFERQGSVMTNTHILKENDVDLVQITNKSSEFDHKGLEKALNNTSVLKTEEILNLKKHKENFSPYQGNQIDDLKYVRLKSELVLSSTYKTVDIEKENSIYVKVTEPERDIDVVTATYYKSVDFMKTNDKSRKGIQIYNKKTGKINDVDYPFLSIERINVKDIISNRRLKNMIRFLKNIKYDCPHIENKGSIRSFHINAICYNIDVKKYEDLHYLDLVSILYQELTNIISNKSYRDNIKSVDGCEYIFEFDCAKKLIEIEFLSQELDSIIADLHNQSLLVG.

This sequence belongs to the CD-NTase family. E subfamily.

It carries out the reaction 2 GTP = 3',3'-c-di-GMP + 2 diphosphate. Its function is as follows. Cyclic nucleotide synthase (second messenger synthase) of a CBASS antivirus system. CBASS (cyclic oligonucleotide-based antiphage signaling system) provides immunity against bacteriophage. The CD-NTase protein synthesizes cyclic nucleotides in response to infection; these serve as specific second messenger signals. The signals activate a diverse range of effectors, leading to bacterial cell death and thus abortive phage infection. A type I-D(GG) CBASS system. Cyclic dinucleotide synthase that catalyzes the synthesis of c-di-GMP, has no activity with other NTP substrates. The protein is c-di-GMP synthase of Flavobacteriaceae sp. genome_bin_11.